The chain runs to 187 residues: Cytochrome b-245 chaperone 1 (187 aa).

The chain crosses the membrane as a helical span at residues Gly-20–Gly-42. A Phosphoserine modification is found at Ser-168.

This sequence belongs to the CYBC1 family. In terms of assembly, interacts with CYBB; CYBC1 may act as a chaperone stabilizing Cytochrome b-245 heterodimer. Highly expressed in macrophages, neutrophils and monocytes.

It is found in the endoplasmic reticulum membrane. Its function is as follows. Functions as a chaperone necessary for a stable expression of the CYBA and CYBB subunits of the cytochrome b-245 heterodimer. Controls the phagocyte respiratory burst and is essential for innate immunity. In Homo sapiens (Human), this protein is Cytochrome b-245 chaperone 1.